A 318-amino-acid polypeptide reads, in one-letter code: ADP-L-glycero-D-manno-heptose-6-epimerase (318 aa).

NADP(+) contacts are provided by residues 10–11 (FI), 31–32 (DD), Lys38, Lys53, and 79–83 (EGACS). Residue Tyr144 is the Proton acceptor of the active site. Lys148 provides a ligand contact to NADP(+). Asn173 lines the substrate pocket. The NADP(+) site is built by Val174 and Lys182. Lys182 (proton acceptor) is an active-site residue. Substrate contacts are provided by residues Ser184, His191, 205 to 208 (FEGC), Arg218, and Tyr282.

This sequence belongs to the NAD(P)-dependent epimerase/dehydratase family. HldD subfamily. As to quaternary structure, homopentamer. Requires NADP(+) as cofactor.

It catalyses the reaction ADP-D-glycero-beta-D-manno-heptose = ADP-L-glycero-beta-D-manno-heptose. Its pathway is nucleotide-sugar biosynthesis; ADP-L-glycero-beta-D-manno-heptose biosynthesis; ADP-L-glycero-beta-D-manno-heptose from D-glycero-beta-D-manno-heptose 7-phosphate: step 4/4. Functionally, catalyzes the interconversion between ADP-D-glycero-beta-D-manno-heptose and ADP-L-glycero-beta-D-manno-heptose via an epimerization at carbon 6 of the heptose. This chain is ADP-L-glycero-D-manno-heptose-6-epimerase, found in Aeromonas hydrophila subsp. hydrophila (strain ATCC 7966 / DSM 30187 / BCRC 13018 / CCUG 14551 / JCM 1027 / KCTC 2358 / NCIMB 9240 / NCTC 8049).